The sequence spans 314 residues: Olfactory receptor 6C6 (314 aa).

Over 1 to 24 the chain is Extracellular; sequence MKNKSMEIEFILLGLTDDPQLQIV. An N-linked (GlcNAc...) asparagine glycan is attached at N3. Residues 25–45 traverse the membrane as a helical segment; it reads IFLFLFLNYTLSLMGNLIIII. The Cytoplasmic portion of the chain corresponds to 46–63; sequence LTLLDPRLKTPMYFFLRN. Residues 64–84 traverse the membrane as a helical segment; sequence FSFLEVIFTTVCIPRFLITIV. Residues 85–95 are Extracellular-facing; that stretch reads TRDKTISYNNC. C95 and C177 form a disulfide bridge. Residues 96 to 116 form a helical membrane-spanning segment; the sequence is ATQLFFILLPGVTEFYLLAAM. The Cytoplasmic segment spans residues 117-141; it reads SYDRYVAICKPLHYPIIMSSKVCYQ. Residues 142 to 162 traverse the membrane as a helical segment; sequence LVLSSWVTGFLIIFPPLVMGL. Topologically, residues 163–199 are extracellular; sequence KLDFCASKTIDHFMCETSPILQISCTDTHVLELMSFT. The helical transmembrane segment at 200–220 threads the bilayer; that stretch reads LAVVTLVVTLVLVILSYTCII. At 221–237 the chain is on the cytoplasmic side; that stretch reads KTILKFSSAQQRNKAFS. The helical transmembrane segment at 238–258 threads the bilayer; the sequence is TCTSHMIVVSMTYGSCIFMYI. Residues 259–269 lie on the Extracellular side of the membrane; it reads KPSAKERVTVS. A helical transmembrane segment spans residues 270–290; sequence KGVALLYTSIAPLLNPFIYTL. At 291 to 314 the chain is on the cytoplasmic side; it reads RNQQVKEVFWDVLQKNLCFSKRPF.

It belongs to the G-protein coupled receptor 1 family.

It is found in the cell membrane. Odorant receptor. The polypeptide is Olfactory receptor 6C6 (OR6C6) (Homo sapiens (Human)).